We begin with the raw amino-acid sequence, 254 residues long: Alcohol dehydrogenase (254 aa).

10 to 33 (FVAGLGGIGLDTSREIVKSGPKNL) provides a ligand contact to NAD(+). Residue S138 coordinates substrate. The active-site Proton acceptor is the Y151.

It belongs to the short-chain dehydrogenases/reductases (SDR) family. In terms of assembly, homodimer.

It carries out the reaction a primary alcohol + NAD(+) = an aldehyde + NADH + H(+). The enzyme catalyses a secondary alcohol + NAD(+) = a ketone + NADH + H(+). This Drosophila flavomontana (Fruit fly) protein is Alcohol dehydrogenase (Adh).